The primary structure comprises 188 residues: Holliday junction branch migration complex subunit RuvA (188 aa).

Residues 1-64 (MIAGISGRVL…QDGITLYGFS (64 aa)) form a domain I region. The interval 65-143 (NEMKKELFLS…SAGIKDMRIY (79 aa)) is domain II. Position 143 (Tyr143) is a region of interest, flexible linker. The domain III stretch occupies residues 143–186 (YHESLEALVSLGYPEKQAREAVKQVYREGMKTSELIKEALKFLS).

It belongs to the RuvA family. Homotetramer. Forms an RuvA(8)-RuvB(12)-Holliday junction (HJ) complex. HJ DNA is sandwiched between 2 RuvA tetramers; dsDNA enters through RuvA and exits via RuvB. An RuvB hexamer assembles on each DNA strand where it exits the tetramer. Each RuvB hexamer is contacted by two RuvA subunits (via domain III) on 2 adjacent RuvB subunits; this complex drives branch migration. In the full resolvosome a probable DNA-RuvA(4)-RuvB(12)-RuvC(2) complex forms which resolves the HJ.

The protein resides in the cytoplasm. Its function is as follows. The RuvA-RuvB-RuvC complex processes Holliday junction (HJ) DNA during genetic recombination and DNA repair, while the RuvA-RuvB complex plays an important role in the rescue of blocked DNA replication forks via replication fork reversal (RFR). RuvA specifically binds to HJ cruciform DNA, conferring on it an open structure. The RuvB hexamer acts as an ATP-dependent pump, pulling dsDNA into and through the RuvAB complex. HJ branch migration allows RuvC to scan DNA until it finds its consensus sequence, where it cleaves and resolves the cruciform DNA. Promotes Holliday junction (HJ) branch migration in conjunction with RuvB. This Thermotoga maritima (strain ATCC 43589 / DSM 3109 / JCM 10099 / NBRC 100826 / MSB8) protein is Holliday junction branch migration complex subunit RuvA.